Reading from the N-terminus, the 605-residue chain is Proline--tRNA ligase (605 aa).

Belongs to the class-II aminoacyl-tRNA synthetase family. ProS type 1 subfamily. In terms of assembly, homodimer.

The protein localises to the cytoplasm. It carries out the reaction tRNA(Pro) + L-proline + ATP = L-prolyl-tRNA(Pro) + AMP + diphosphate. Catalyzes the attachment of proline to tRNA(Pro) in a two-step reaction: proline is first activated by ATP to form Pro-AMP and then transferred to the acceptor end of tRNA(Pro). As ProRS can inadvertently accommodate and process non-cognate amino acids such as alanine and cysteine, to avoid such errors it has two additional distinct editing activities against alanine. One activity is designated as 'pretransfer' editing and involves the tRNA(Pro)-independent hydrolysis of activated Ala-AMP. The other activity is designated 'posttransfer' editing and involves deacylation of mischarged Ala-tRNA(Pro). The misacylated Cys-tRNA(Pro) is not edited by ProRS. The chain is Proline--tRNA ligase from Bifidobacterium adolescentis (strain ATCC 15703 / DSM 20083 / NCTC 11814 / E194a).